A 252-amino-acid chain; its full sequence is Triosephosphate isomerase (252 aa).

Residue 10–12 (NWK) participates in substrate binding. The Electrophile role is filled by H96. The active-site Proton acceptor is the E168. Residues G174, S214, and 235-236 (GG) each bind substrate.

It belongs to the triosephosphate isomerase family. Homodimer.

The protein resides in the cytoplasm. The catalysed reaction is D-glyceraldehyde 3-phosphate = dihydroxyacetone phosphate. It participates in carbohydrate biosynthesis; gluconeogenesis. It functions in the pathway carbohydrate degradation; glycolysis; D-glyceraldehyde 3-phosphate from glycerone phosphate: step 1/1. Functionally, involved in the gluconeogenesis. Catalyzes stereospecifically the conversion of dihydroxyacetone phosphate (DHAP) to D-glyceraldehyde-3-phosphate (G3P). This Lactobacillus helveticus (strain DPC 4571) protein is Triosephosphate isomerase.